A 559-amino-acid polypeptide reads, in one-letter code: 2-isopropylmalate synthase (559 aa).

Positions 33 to 307 constitute a Pyruvate carboxyltransferase domain; sequence PIWCSSDLRD…NPDLDFSDID (275 aa). Mg(2+)-binding residues include Asp42, His246, His248, and Asn282. The regulatory domain stretch occupies residues 439–559; that stretch reads ANTPYALVSH…SLSQPEAKAA (121 aa).

Belongs to the alpha-IPM synthase/homocitrate synthase family. LeuA type 2 subfamily. As to quaternary structure, homodimer. Mg(2+) serves as cofactor.

It is found in the cytoplasm. It catalyses the reaction 3-methyl-2-oxobutanoate + acetyl-CoA + H2O = (2S)-2-isopropylmalate + CoA + H(+). It participates in amino-acid biosynthesis; L-leucine biosynthesis; L-leucine from 3-methyl-2-oxobutanoate: step 1/4. Functionally, catalyzes the condensation of the acetyl group of acetyl-CoA with 3-methyl-2-oxobutanoate (2-ketoisovalerate) to form 3-carboxy-3-hydroxy-4-methylpentanoate (2-isopropylmalate). In Pseudomonas fluorescens (strain Pf0-1), this protein is 2-isopropylmalate synthase.